A 108-amino-acid polypeptide reads, in one-letter code: Cell cycle protein GpsB (108 aa).

Residues Leu32–Ala69 are a coiled coil.

It belongs to the GpsB family. In terms of assembly, forms polymers through the coiled coil domains. Interacts with PBP1, MreC and EzrA.

It is found in the cytoplasm. Divisome component that associates with the complex late in its assembly, after the Z-ring is formed, and is dependent on DivIC and PBP2B for its recruitment to the divisome. Together with EzrA, is a key component of the system that regulates PBP1 localization during cell cycle progression. Its main role could be the removal of PBP1 from the cell pole after pole maturation is completed. Also contributes to the recruitment of PBP1 to the division complex. Not essential for septum formation. The protein is Cell cycle protein GpsB of Streptococcus pyogenes serotype M49 (strain NZ131).